Consider the following 354-residue polypeptide: Uroporphyrinogen decarboxylase (354 aa).

Residues 27-31 (RQAGR), Asp-77, Tyr-154, Ser-209, and His-327 contribute to the substrate site.

The protein belongs to the uroporphyrinogen decarboxylase family. As to quaternary structure, homodimer.

Its subcellular location is the cytoplasm. It carries out the reaction uroporphyrinogen III + 4 H(+) = coproporphyrinogen III + 4 CO2. Its pathway is porphyrin-containing compound metabolism; protoporphyrin-IX biosynthesis; coproporphyrinogen-III from 5-aminolevulinate: step 4/4. In terms of biological role, catalyzes the decarboxylation of four acetate groups of uroporphyrinogen-III to yield coproporphyrinogen-III. This chain is Uroporphyrinogen decarboxylase, found in Shewanella putrefaciens (strain CN-32 / ATCC BAA-453).